The sequence spans 376 residues: Zinc transporter 7 (376 aa).

Residues 1-37 (MLPLSIKDDEYKPPKFNLFRKISGWFRSILSDKTSRN) lie on the Cytoplasmic side of the membrane. A helical transmembrane segment spans residues 38-58 (LFFFLCLNLSFAFVELLYGIW). The Lumenal segment spans residues 59-67 (SNCLGLISD). The helical transmembrane segment at 68 to 88 (SFHMFFDSTAILAGLAASVIS) threads the bilayer. Residues 89 to 102 (KWRDNDAFSYGYVR) lie on the Cytoplasmic side of the membrane. A helical transmembrane segment spans residues 103–123 (AEVLAGFVNGLFLIFTAFFIF). The Lumenal segment spans residues 124-140 (SEGVERALAPPDVHHER). The chain crosses the membrane as a helical span at residues 141 to 161 (LLLVSILGFVVNLVGIFVFKH). Residues 161–218 (HGGHGHSHGSGHGHSHSLFNGALDQTHGHGDHCHSHELKHGAAHSHDHAHGHGHFHSH) form a his-rich loop region. Topologically, residues 162-236 (GGHGHSHGSG…TGPSRQILQG (75 aa)) are cytoplasmic. A compositionally biased stretch (basic and acidic residues) spans 188–222 (GHGDHCHSHELKHGAAHSHDHAHGHGHFHSHDGPS). A disordered region spans residues 188 to 226 (GHGDHCHSHELKHGAAHSHDHAHGHGHFHSHDGPSLKET). The chain crosses the membrane as a helical span at residues 237 to 257 (VFLHILADTLGSIGVIASAIM). The Lumenal portion of the chain corresponds to 258–262 (MQNFG). The helical transmembrane segment at 263–283 (LMIADPICSILIAMLIVISVI) threads the bilayer. Over 284-376 (PLLRESVGIL…LYVQIDFAAM (93 aa)) the chain is Cytoplasmic.

This sequence belongs to the cation diffusion facilitator (CDF) transporter (TC 2.A.4) family. SLC30A subfamily. In terms of assembly, homooligomer.

It localises to the golgi apparatus membrane. Its subcellular location is the cytoplasmic vesicle. The protein localises to the golgi apparatus. The protein resides in the trans-Golgi network. It is found in the sarcoplasmic reticulum. It localises to the mitochondrion. It catalyses the reaction Zn(2+)(in) = Zn(2+)(out). Zinc ion transporter mediating zinc entry from the cytosol into the lumen of organelles along the secretory pathway. By contributing to zinc ion homeostasis within the early secretory pathway, regulates the activation and folding of enzymes like alkaline phosphatases. The chain is Zinc transporter 7 (SLC30A7) from Bos taurus (Bovine).